The chain runs to 217 residues: Methylthioribulose-1-phosphate dehydratase (217 aa).

Zn(2+) contacts are provided by His-106 and His-108.

Belongs to the aldolase class II family. MtnB subfamily. Zn(2+) is required as a cofactor.

It carries out the reaction 5-(methylsulfanyl)-D-ribulose 1-phosphate = 5-methylsulfanyl-2,3-dioxopentyl phosphate + H2O. It participates in amino-acid biosynthesis; L-methionine biosynthesis via salvage pathway; L-methionine from S-methyl-5-thio-alpha-D-ribose 1-phosphate: step 2/6. Catalyzes the dehydration of methylthioribulose-1-phosphate (MTRu-1-P) into 2,3-diketo-5-methylthiopentyl-1-phosphate (DK-MTP-1-P). This chain is Methylthioribulose-1-phosphate dehydratase, found in Xanthomonas campestris pv. campestris (strain B100).